The chain runs to 597 residues: ATP-dependent lipid A-core flippase (597 aa).

6 helical membrane passes run 26-46 (LWPY…AMAV), 76-96 (WFVP…QYAS), 138-158 (AIVF…VTLV), 164-184 (VVFL…IVAV), 263-283 (QPLT…IAVV), and 292-312 (VGGF…LKHL). Residues 38-321 (IGAIVAMAVS…LMDVNQPLQR (284 aa)) enclose the ABC transmembrane type-1 domain. Residues 353-590 (VEFRDVSFVY…DGLYAHLHRI (238 aa)) form the ABC transporter domain. An ATP-binding site is contributed by 390 to 397 (GPSGSGKT).

It belongs to the ABC transporter superfamily. Lipid exporter (TC 3.A.1.106) family. In terms of assembly, homodimer.

It localises to the cell inner membrane. The enzyme catalyses ATP + H2O + lipid A-core oligosaccharideSide 1 = ADP + phosphate + lipid A-core oligosaccharideSide 2.. In terms of biological role, involved in lipopolysaccharide (LPS) biosynthesis. Translocates lipid A-core from the inner to the outer leaflet of the inner membrane. Transmembrane domains (TMD) form a pore in the inner membrane and the ATP-binding domain (NBD) is responsible for energy generation. The polypeptide is ATP-dependent lipid A-core flippase (Paraburkholderia xenovorans (strain LB400)).